A 332-amino-acid chain; its full sequence is 5-dehydro-2-deoxygluconokinase (332 aa).

Belongs to the carbohydrate kinase PfkB family.

It catalyses the reaction 5-dehydro-2-deoxy-D-gluconate + ATP = 6-phospho-5-dehydro-2-deoxy-D-gluconate + ADP + H(+). It participates in polyol metabolism; myo-inositol degradation into acetyl-CoA; acetyl-CoA from myo-inositol: step 5/7. In terms of biological role, catalyzes the phosphorylation of 5-dehydro-2-deoxy-D-gluconate (2-deoxy-5-keto-D-gluconate or DKG) to 6-phospho-5-dehydro-2-deoxy-D-gluconate (DKGP). The chain is 5-dehydro-2-deoxygluconokinase from Bacillus thuringiensis (strain Al Hakam).